Here is a 366-residue protein sequence, read N- to C-terminus: Galactoside alpha-(1,2)-fucosyltransferase 1 (366 aa).

Topologically, residues 1 to 8 (MWPPSHRQ) are cytoplasmic. A helical; Signal-anchor for type II membrane protein membrane pass occupies residues 9–25 (LCRAFLLVCVFSVISFF). Topologically, residues 26-366 (LHIHQDSFPH…LSPLWTLAKP (341 aa)) are lumenal. 3 N-linked (GlcNAc...) asparagine glycosylation sites follow: N66, N302, and N328.

The protein belongs to the glycosyltransferase 11 family.

The protein resides in the golgi apparatus. The protein localises to the golgi stack membrane. The enzyme catalyses a beta-D-galactosyl-(1-&gt;4)-N-acetyl-beta-D-glucosaminyl derivative + GDP-beta-L-fucose = an alpha-L-Fuc-(1-&gt;2)-beta-D-Gal-(1-&gt;4)-beta-D-GlcNAc derivative + GDP + H(+). It carries out the reaction a ganglioside GA1 + GDP-beta-L-fucose = a ganglioside Fuc-GA1 + GDP + H(+). The catalysed reaction is a beta-D-Gal-(1-&gt;3)-beta-D-GlcNAc-(1-&gt;3)-beta-D-Gal-(1-&gt;4)-beta-D-Glc-(1&lt;-&gt;1')-Cer(d18:1(4E)) + GDP-beta-L-fucose = alpha-L-fucosyl-(1-&gt;2)- beta-D-galactosyl-(1-&gt;3)-N-acetyl-beta-D-glucosaminyl-(1-&gt;3)-beta-D-galactosyl-(1-&gt;4)-beta-D-glucosyl-(1&lt;-&gt;1')-N-acylsphing-4-enine + GDP + H(+). It catalyses the reaction a neolactoside nLc4Cer(d18:1(4E)) + GDP-beta-L-fucose = a neolactoside IV(2)-alpha-Fuc-nLc4Cer(d18:1(4E)) + GDP + H(+). The enzyme catalyses a ganglioside GM1 + GDP-beta-L-fucose = a ganglioside Fuc-GM1 + GDP + H(+). It carries out the reaction beta-D-galactosyl-(1-&gt;3)-N-acetyl-D-galactosamine + GDP-beta-L-fucose = alpha-L-fucosyl-(1-&gt;2)-beta-D-galactosyl-(1-&gt;3)-N-acetyl-D-galactosamine + GDP + H(+). The protein operates within protein modification; protein glycosylation. In terms of biological role, catalyzes the transfer of L-fucose, from a guanosine diphosphate-beta-L-fucose, to the terminal galactose residue of glycoconjugates through an alpha(1,2) linkage leading to H antigen synthesis that is an intermediate substrate in the synthesis of ABO blood group antigens. H antigen is essential for maturation of the glomerular layer of the main olfactory bulb, in cell migration and early cell-cell contacts during tumor associated angiogenesis. Preferentially fucosylates soluble lactose and to a lesser extent fucosylates glycolipids gangliosides GA1 and GM1a. In Gorilla gorilla gorilla (Western lowland gorilla), this protein is Galactoside alpha-(1,2)-fucosyltransferase 1.